The following is a 7388-amino-acid chain: Microtubule-actin cross-linking factor 1, isoforms 1/2/3/4/5 (7388 aa).

Positions 1-47 are disordered; it reads MSSSDEETLSERSCRSERSCRSERSYRSERSGSLSPCPPGDTLPWNL. Positions 1-295 are actin-binding; it reads MSSSDEETLS…VITYVSSIYD (295 aa). At Ser4 the chain carries Phosphoserine. Residues 9–30 are compositionally biased toward basic and acidic residues; the sequence is LSERSCRSERSCRSERSYRSER. Phosphoserine occurs at positions 35 and 57. 2 consecutive Calponin-homology (CH) domains span residues 78–181 and 194–298; these read RVQK…LHFQ and MSAK…DAFP. LRR repeat units follow at residues 148 to 171 and 240 to 264; these read QRQVKLVNIRNDDITDGNPKLTLG and LVDMERVQIQSNRENLEQAFEVAER. The residue at position 280 (Ser280) is a Phosphoserine. LRR repeat units follow at residues 377-399 and 441-464; these read LYKLLEVWIEFGRIKLPQGYHPN and LNCEEKLTLAKNTLQADAAHLESG. Ser814 is subject to Phosphoserine. The SH3 domain maps to 868 to 925; that stretch reads KNTISVKAVCDYRQIEITICKNDECVLEDNSQRTKWKVISPTGNEAMVPSVCFLIPPP. Residues 1050–1073 form an LRR 5 repeat; that stretch reads ISELKNIRLRLEEYEQRVVKRIQS. Ser1122 bears the Phosphoserine mark. LRR repeat units follow at residues 1128-1154, 1187-1210, and 1257-1282; these read VPTLRSELNLLVEKMDHVYGLSTVYLN, LADLSALEAHWSTLRHWLSDVKDK, and HRVIAQLEIRQSELESIQEVLGDYRA. Phosphoserine is present on residues Ser1367 and Ser1376. Plectin repeat units follow at residues 1577–1621, 1654–1696, 1769–1809, 1811–1848, and 1855–1886; these read LVLL…RELQ, LKIL…VLES, RLLE…CAIL, RQLQTGGIIDTVTGQRLTIDEAVSNDLVAAKIALVILE, and GLLWPESGEILPITDALEQGIVSTELAHKILS. Residues Ser2006 and Ser2051 each carry the phosphoserine modification. Residues 2051–2085 form a disordered region; sequence SQNKEYPDREDCTTEKGKKTTVETEDSSVENPEQD. Residues 2055 to 2072 show a composition bias toward basic and acidic residues; the sequence is EYPDREDCTTEKGKKTTV. Ser2077 carries the phosphoserine modification. Plectin repeat units follow at residues 2290-2332, 2367-2410, 2411-2437, 2501-2543, 2581-2612, and 2686-2730; these read LNVL…KLME, NVLM…LERQ, VVTGGIIDLKRGKKVSVTLASTLGLVD, RLLT…LKRV, EVQAFTGNFVDLISGQRLTLAEAKKEGLLTNE, and LKVL…ASHQ. Disordered regions lie at residues 3013–3034 and 3104–3174; these read EHDSHIKSQPREMTSSEKGKEA and SEPF…NECK. Positions 3115-3124 are enriched in basic and acidic residues; the sequence is EGLHYQESDG. Ser3122 bears the Phosphoserine mark. The span at 3129-3158 shows a compositional bias: polar residues; sequence TGPSQISKTDKSFQGTTRQETNYQDSWVTS. LRR repeat units lie at residues 3239–3262 and 3264–3283; these read LTGEKFLEMANPNVAGLEAGSIED and VTQRGSRVLGSFLPEKLFKG. The segment covering 3321 to 3332 has biased composition (basic and acidic residues); sequence EKTPQEKLRESP. The interval 3321 to 3350 is disordered; the sequence is EKTPQEKLRESPGSEQTPFMTAPEGKGNGG. Ser3331 is subject to Phosphoserine. LRR repeat units lie at residues 3646 to 3669 and 3696 to 3720; these read QQDLSALQKNQSDLKDLQDDIQNR and LTALREKLHQAKEQYEALQEETRVA. 2 Spectrin repeats span residues 3883–3957 and 4000–4108; these read ELQK…NSFK and QYHQ…SLLQ. The residue at position 3927 (Ser3927) is a Phosphoserine. The stretch at 3936 to 3958 is one LRR 13 repeat; that stretch reads KGDLRFVTISGQKVLDMENSFKE. LRR repeat units follow at residues 4125-4150 and 4261-4287; these read LQSIGEVEQNLEGKQVSSLSSGVIQE and IQELNLEMEDQQENLDTLEHLVTELSS. One copy of the Spectrin 3 repeat lies at 4466-4574; the sequence is RMEEVHKEAN…TVARQRQLEE (109 aa). Phosphoserine occurs at positions 4495, 4496, and 4521. 3 LRR repeats span residues 4511 to 4534, 4601 to 4624, and 4769 to 4792; these read KAFLAELEQNSPKIQKVKEALAGL, GVLGPLSIDPNMLNAQKQQVQFML, and KKRLETVALPLQGLEDLAADRINR. Spectrin repeat units follow at residues 4800 to 4904 and 4909 to 5012; these read TQQF…SRLK and KAQK…SLEE. Phosphoserine occurs at positions 4836 and 4962. LRR repeat units follow at residues 5051–5076, 5172–5194, and 5281–5304; these read NKNLEKLRAQQEVLQALEPQVDYLRN, NKIHVLKLDIEASEAECRHMLEE, and KEQVDPLQMKLQQVNGLGQGLIQS. 3 Spectrin repeats span residues 5236-5341, 5348-5450, and 5455-5557; these read EDFY…QLQE, KFQD…QLED, and AKQF…LRTL. At Thr5435 the chain carries Phosphothreonine. The tract at residues 5583–5603 is disordered; sequence EELATSGGQSPTGEQIPQFQQ. Over residues 5588–5603 the composition is skewed to polar residues; the sequence is SGGQSPTGEQIPQFQQ. 2 LRR repeats span residues 5695–5719 and 5804–5828; these read MALGPIRLEQDQTTAQLQVQKAFSI and AQLPSPAIDHEQLRQQQEEMRQLRE. Spectrin repeat units lie at residues 5783–5885, 6005–6110, 6115–6219, 6225–6328, 6333–6439, 6443–6547, 6552–6658, 6665–6766, and 6771–6874; these read NQFW…ALDE, LAEK…KLED, AVQY…HKLE, LGQF…QQLQ, QAQG…KLEE, LATE…RSLD, RAKQ…KLEE, QFMD…RLEQ, and AEVF…QRLE. Ser5808 and Ser6032 each carry phosphoserine. The residue at position 6210 (Lys6210) is an N6-acetyllysine. The LRR 24 repeat unit spans residues 6496-6519; it reads RDQIIELDQTGNQLKFLSQKQDVV. The interval 6951–6981 is disordered; sequence PTHAPFIEKSRSGGRKSLSQPTPPPMPILSQ. Ser6967 is subject to Phosphoserine. EF-hand domains are found at residues 7041-7076 and 7077-7112; these read HKKSRVMDFFRRIDKDQDGKITRQEFIDGILASKFP and TTKLEMTAVADIFDRDGDGYIDYYEFVAALHPNKDA. 10 residues coordinate Ca(2+): Asp7054, Asp7056, Asp7058, Lys7060, Glu7065, Asp7090, Asp7092, Asp7094, Tyr7096, and Glu7101. The GAR domain occupies 7117–7189; sequence TDADKIEDEV…EFLVKNDPCR (73 aa). Residues 7117–7388 form a C-terminal tail region; the sequence is TDADKIEDEV…ASPRTPGPKR (272 aa). Residues 7205-7388 form a disordered region; it reads PEGASQGMTP…ASPRTPGPKR (184 aa). Residues 7225 to 7259 are compositionally biased toward low complexity; it reads SSRAASPTRSSSSASQSNHSCTSMPSSPATPASGT. Phosphothreonine is present on Thr7254. The span at 7275–7299 shows a compositional bias: polar residues; the sequence is TFHSSRTSLAGDTSNSSSPASTGAK. Phosphoserine is present on residues Ser7279 and Ser7292. Residues 7310-7324 show a composition bias toward low complexity; it reads SRPGSRAGSRAGSRA. The segment at 7313-7328 is 4 X 4 AA tandem repeats of [GS]-S-R-[AR]; the sequence is GSRAGSRAGSRASSRR. 2 positions are modified to phosphoserine: Ser7330 and Ser7333. Polar residues predominate over residues 7339–7361; sequence ETQSACSDTSESSAAGGQGNSRR.

It belongs to the plakin or cytolinker family. Isoform 2: Interacts with MAPRE1, CLASP1, CLASP2, AXIN1 and LRP6. Isoform 2: Found in a complex composed of MACF1, APC, AXIN1, CTNNB1 and GSK3B. Isoform 2: Interacts with GOLGA4. Isoform 2: Interacts with CAMSAP3. In terms of processing, phosphorylated on serine residues in the C-terminal tail by GSK3B. Phosphorylation inhibits microtubule-binding and this plays a critical role in bulge stem cell migration and skin wound repair. Wnt-signaling can repress phosphorylation. In terms of tissue distribution, isoform 2: Ubiquitously expressed. Isoform 1: Expressed in cell lines NCI-H460, A-549 and HaCaT. Isoform 4: Expressed in heart, lung, pituitary and placenta, not found in brain, kidney, liver, pancreas or skeletal muscle.

The protein resides in the cytoplasm. The protein localises to the cytoskeleton. Its subcellular location is the golgi apparatus. It localises to the cell membrane. It is found in the cell projection. The protein resides in the ruffle membrane. Its function is as follows. F-actin-binding protein which plays a role in cross-linking actin to other cytoskeletal proteins and also binds to microtubules. Plays an important role in ERBB2-dependent stabilization of microtubules at the cell cortex. Acts as a positive regulator of Wnt receptor signaling pathway and is involved in the translocation of AXIN1 and its associated complex (composed of APC, CTNNB1 and GSK3B) from the cytoplasm to the cell membrane. Has actin-regulated ATPase activity and is essential for controlling focal adhesions (FAs) assembly and dynamics. Interaction with CAMSAP3 at the minus ends of non-centrosomal microtubules tethers microtubules minus-ends to actin filaments, regulating focal adhesion size and cell migration. May play role in delivery of transport vesicles containing GPI-linked proteins from the trans-Golgi network through its interaction with GOLGA4. Plays a key role in wound healing and epidermal cell migration. Required for efficient upward migration of bulge cells in response to wounding and this function is primarily rooted in its ability to coordinate microtubule dynamics and polarize hair follicle stem cells. As a regulator of actin and microtubule arrangement and stabilization, it plays an essential role in neurite outgrowth, branching and spine formation during brain development. The sequence is that of Microtubule-actin cross-linking factor 1, isoforms 1/2/3/4/5 from Homo sapiens (Human).